The chain runs to 501 residues: Ribose import ATP-binding protein RbsA (501 aa).

2 ABC transporter domains span residues 5 to 241 (LQLK…VGRK) and 252 to 495 (APGE…VGKL). 37–44 (GENGAGKS) is a binding site for ATP.

This sequence belongs to the ABC transporter superfamily. Ribose importer (TC 3.A.1.2.1) family. As to quaternary structure, the complex is composed of an ATP-binding protein (RbsA), two transmembrane proteins (RbsC) and a solute-binding protein (RbsB).

The protein resides in the cell inner membrane. It carries out the reaction D-ribose(out) + ATP + H2O = D-ribose(in) + ADP + phosphate + H(+). Functionally, part of the ABC transporter complex RbsABC involved in ribose import. Responsible for energy coupling to the transport system. The chain is Ribose import ATP-binding protein RbsA from Salmonella typhimurium (strain LT2 / SGSC1412 / ATCC 700720).